The following is a 184-amino-acid chain: Oligoribonuclease (184 aa).

An Exonuclease domain is found at 7–170 (LIWIDLEMTG…DDIRESVAEL (164 aa)). Y128 is an active-site residue.

It belongs to the oligoribonuclease family.

Its subcellular location is the cytoplasm. Functionally, 3'-to-5' exoribonuclease specific for small oligoribonucleotides. This chain is Oligoribonuclease, found in Baumannia cicadellinicola subsp. Homalodisca coagulata.